The primary structure comprises 333 residues: Phosphate acyltransferase (333 aa).

This sequence belongs to the PlsX family. Homodimer. Probably interacts with PlsY.

It is found in the cytoplasm. The catalysed reaction is a fatty acyl-[ACP] + phosphate = an acyl phosphate + holo-[ACP]. The protein operates within lipid metabolism; phospholipid metabolism. In terms of biological role, catalyzes the reversible formation of acyl-phosphate (acyl-PO(4)) from acyl-[acyl-carrier-protein] (acyl-ACP). This enzyme utilizes acyl-ACP as fatty acyl donor, but not acyl-CoA. This chain is Phosphate acyltransferase, found in Clostridium botulinum (strain Alaska E43 / Type E3).